Reading from the N-terminus, the 521-residue chain is Probable cytosol aminopeptidase (521 aa).

Positions 268 and 273 each coordinate Mn(2+). Lys280 is an active-site residue. Residues Asp291, Asp350, and Glu352 each coordinate Mn(2+). Arg354 is an active-site residue.

Belongs to the peptidase M17 family. The cofactor is Mn(2+).

Its subcellular location is the cytoplasm. It carries out the reaction Release of an N-terminal amino acid, Xaa-|-Yaa-, in which Xaa is preferably Leu, but may be other amino acids including Pro although not Arg or Lys, and Yaa may be Pro. Amino acid amides and methyl esters are also readily hydrolyzed, but rates on arylamides are exceedingly low.. It catalyses the reaction Release of an N-terminal amino acid, preferentially leucine, but not glutamic or aspartic acids.. Presumably involved in the processing and regular turnover of intracellular proteins. Catalyzes the removal of unsubstituted N-terminal amino acids from various peptides. This chain is Probable cytosol aminopeptidase, found in Chromobacterium violaceum (strain ATCC 12472 / DSM 30191 / JCM 1249 / CCUG 213 / NBRC 12614 / NCIMB 9131 / NCTC 9757 / MK).